The following is a 288-amino-acid chain: Serine/threonine-protein phosphatase PGAM5, mitochondrial (288 aa).

The Mitochondrial matrix segment spans residues 1–6 (MAFRQA). The helical transmembrane segment at 7–29 (LQLAACGLAGGSAAVLFSAVAVG) threads the bilayer. Residues 30–288 (KPRAGGDADT…FMPPDKITRS (259 aa)) are Mitochondrial intermembrane-facing. Positions 76 to 81 (NVEFGE) are interaction with KEAP1. Serine 86 carries the phosphoserine modification. Residues lysine 115, lysine 143, and lysine 190 each carry the N6-acetyllysine modification.

This sequence belongs to the phosphoglycerate mutase family. BPG-dependent PGAM subfamily. As to quaternary structure, dimer. Forms a ternary complex with NFE2L2 and KEAP1. Interacts with BCL2L1 and MAP3K5. Upon TNF-induced necrosis, forms in complex with RIPK1, RIPK3 and MLKL; the formation of this complex leads to PGAM5 phosphorylation. Isoform 2, but not isoform 1, interacts with DNM1L; this interaction leads to DNM1L dephosphorylation and activation and eventually to mitochondria fragmentation. In terms of processing, phosphorylated by the RIPK1/RIPK3 complex under necrotic conditions. This phosphorylation increases PGAM5 phosphatase activity. Post-translationally, proteolytically cleaved by PARL in response to loss of mitochondrial membrane potential.

The protein resides in the mitochondrion outer membrane. The protein localises to the mitochondrion inner membrane. The catalysed reaction is O-phospho-L-seryl-[protein] + H2O = L-seryl-[protein] + phosphate. It carries out the reaction O-phospho-L-threonyl-[protein] + H2O = L-threonyl-[protein] + phosphate. Functionally, mitochondrial serine/threonine phosphatase that dephosphorylates various substrates and thus plays a role in different biological processes including cellular senescence or mitophagy. Modulates cellular senescence by regulating mitochondrial dynamics. Mechanistically, participates in mitochondrial fission through dephosphorylating DNM1L/DRP1. Additionally, dephosphorylates MFN2 in a stress-sensitive manner and consequently protects it from ubiquitination and degradation to promote mitochondrial network formation. Regulates mitophagy independent of PARKIN by interacting with and dephosphorylating FUNDC1, which interacts with LC3. Regulates anti-oxidative response by forming a tertiary complex with KEAP1 and NRF2. Regulates necroptosis by acting as a RIPK3 target and recruiting the RIPK1-RIPK3-MLKL necrosis 'attack' complex to mitochondria. The protein is Serine/threonine-protein phosphatase PGAM5, mitochondrial (Pgam5) of Rattus norvegicus (Rat).